We begin with the raw amino-acid sequence, 149 residues long: Large ribosomal subunit protein bL9 (149 aa).

It belongs to the bacterial ribosomal protein bL9 family.

Its function is as follows. Binds to the 23S rRNA. The protein is Large ribosomal subunit protein bL9 of Edwardsiella ictaluri (strain 93-146).